We begin with the raw amino-acid sequence, 22 residues long: Cysteine-rich venom protein notescatin (22 aa).

A compositionally biased stretch (basic and acidic residues) spans Ser1–Asn15. The interval Ser1–Lys22 is disordered.

Belongs to the CRISP family. Post-translationally, contains 8 disulfide bonds. As to expression, expressed by the venom gland.

The protein localises to the secreted. This is Cysteine-rich venom protein notescatin from Notechis scutatus scutatus (Mainland tiger snake).